A 308-amino-acid polypeptide reads, in one-letter code: Aspartate carbamoyltransferase catalytic subunit (308 aa).

Residues Arg-58 and Thr-59 each contribute to the carbamoyl phosphate site. Lys-86 is a binding site for L-aspartate. Carbamoyl phosphate-binding residues include Arg-108, His-136, and Gln-139. L-aspartate contacts are provided by Arg-169 and Arg-227. 2 residues coordinate carbamoyl phosphate: Gly-268 and Pro-269.

This sequence belongs to the aspartate/ornithine carbamoyltransferase superfamily. ATCase family. In terms of assembly, heterododecamer (2C3:3R2) of six catalytic PyrB chains organized as two trimers (C3), and six regulatory PyrI chains organized as three dimers (R2).

The catalysed reaction is carbamoyl phosphate + L-aspartate = N-carbamoyl-L-aspartate + phosphate + H(+). It participates in pyrimidine metabolism; UMP biosynthesis via de novo pathway; (S)-dihydroorotate from bicarbonate: step 2/3. Functionally, catalyzes the condensation of carbamoyl phosphate and aspartate to form carbamoyl aspartate and inorganic phosphate, the committed step in the de novo pyrimidine nucleotide biosynthesis pathway. The sequence is that of Aspartate carbamoyltransferase catalytic subunit from Chloroflexus aurantiacus (strain ATCC 29366 / DSM 635 / J-10-fl).